Consider the following 535-residue polypeptide: Ribonuclease Y 2 (535 aa).

The chain crosses the membrane as a helical span at residues 1–21 (MLITGLIIGCLLIGLVIGYVV). Positions 207 to 268 (LEHTVTVPNG…IRREVARVAL (62 aa)) constitute a KH domain. The region spanning 334–427 (VLLHSIEVAQ…VAAADAISGA (94 aa)) is the HD domain.

Belongs to the RNase Y family.

It is found in the cell membrane. Endoribonuclease that initiates mRNA decay. The protein is Ribonuclease Y 2 of Levilactobacillus brevis (strain ATCC 367 / BCRC 12310 / CIP 105137 / JCM 1170 / LMG 11437 / NCIMB 947 / NCTC 947) (Lactobacillus brevis).